The chain runs to 147 residues: D-aminoacyl-tRNA deacylase (147 aa).

The short motif at 137 to 138 is the Gly-cisPro motif, important for rejection of L-amino acids element; that stretch reads GP.

This sequence belongs to the DTD family. Homodimer.

The protein localises to the cytoplasm. The catalysed reaction is glycyl-tRNA(Ala) + H2O = tRNA(Ala) + glycine + H(+). It catalyses the reaction a D-aminoacyl-tRNA + H2O = a tRNA + a D-alpha-amino acid + H(+). In terms of biological role, an aminoacyl-tRNA editing enzyme that deacylates mischarged D-aminoacyl-tRNAs. Also deacylates mischarged glycyl-tRNA(Ala), protecting cells against glycine mischarging by AlaRS. Acts via tRNA-based rather than protein-based catalysis; rejects L-amino acids rather than detecting D-amino acids in the active site. By recycling D-aminoacyl-tRNA to D-amino acids and free tRNA molecules, this enzyme counteracts the toxicity associated with the formation of D-aminoacyl-tRNA entities in vivo and helps enforce protein L-homochirality. The polypeptide is D-aminoacyl-tRNA deacylase (Exiguobacterium sp. (strain ATCC BAA-1283 / AT1b)).